We begin with the raw amino-acid sequence, 492 residues long: Cholesteryl ester transfer protein (492 aa).

An N-terminal signal peptide occupies residues 1 to 17; that stretch reads MLAVTLLSLALLGSTCA. Residues cysteine 160 and cysteine 201 are joined by a disulfide bond. The N-linked (GlcNAc...) asparagine glycan is linked to asparagine 257.

The protein belongs to the BPI/LBP/Plunc superfamily. BPI/LBP family.

The protein localises to the secreted. It carries out the reaction cholesteryl (9Z-octadecenoate)(in) = cholesteryl (9Z-octadecenoate)(out). It catalyses the reaction 1,2,3-tri-(9Z-octadecenoyl)-glycerol(in) = 1,2,3-tri-(9Z-octadecenoyl)-glycerol(out). The catalysed reaction is cholesteryl (9Z,12Z)-octadecadienoate(in) = cholesteryl (9Z,12Z)-octadecadienoate(out). Involved in the transfer of neutral lipids, including cholesteryl ester and triglyceride, among lipoprotein particles. Allows the net movement of cholesteryl ester from high density lipoproteins/HDL to triglyceride-rich very low density lipoproteins/VLDL, and the equimolar transport of triglyceride from VLDL to HDL. Regulates the reverse cholesterol transport, by which excess cholesterol is removed from peripheral tissues and returned to the liver for elimination. The sequence is that of Cholesteryl ester transfer protein from Cricetulus griseus (Chinese hamster).